The sequence spans 110 residues: Iron-sulfur cluster assembly protein CyaY (110 aa).

Belongs to the frataxin family.

Its function is as follows. Involved in iron-sulfur (Fe-S) cluster assembly. May act as a regulator of Fe-S biogenesis. This Pseudomonas fluorescens (strain SBW25) protein is Iron-sulfur cluster assembly protein CyaY.